We begin with the raw amino-acid sequence, 272 residues long: Putative hydro-lyase BBta_2883 (272 aa).

This sequence belongs to the D-glutamate cyclase family.

This is Putative hydro-lyase BBta_2883 from Bradyrhizobium sp. (strain BTAi1 / ATCC BAA-1182).